The sequence spans 530 residues: DEK domain-containing chromatin-associated protein 2 (530 aa).

2 stretches are compositionally biased toward basic and acidic residues: residues 1-47 (MATE…AEEE) and 57-68 (AKEGELGEKDKE). A disordered region spans residues 1 to 130 (MATETLDEKT…PSKSVSIEKG (130 aa)). Residues 41 to 61 (IGEAEEEKKEDEEEGEAKEGE) are a coiled coil. Positions 69–82 (DDVESEEEEEEEEG) are enriched in acidic residues. Composition is skewed to basic and acidic residues over residues 83 to 93 (SGSKKSSEKET) and 100 to 110 (RPTRERKKVER). The stretch at 185–205 (EKEEEKQRARIKEKIDKCVKE) forms a coiled coil. The segment at 246 to 430 (IIADQEKAKK…GKAKAEPTRK (185 aa)) is disordered. Positions 253-263 (AKKRKSTPKRG) are enriched in basic residues. The Nuclear localization signal 1 motif lies at 260-267 (PKRGKSGE). Acidic residues predominate over residues 286 to 332 (SDTEEGKDEGDADSEGTNDPHEEDDAAPEEESDHEKTDTDDEKDEVE). Short sequence motifs (nuclear localization signal) lie at residues 343–350 (SKKTVEES) and 384–391 (AKKQKVDH). The span at 374–384 (KQIAKSTSSPA) shows a compositional bias: polar residues. Basic and acidic residues predominate over residues 387-397 (QKVDHVESSKE). The DEK-C domain occupies 426–481 (EPTRKEMLEVVSKILKEVDFNTATLSDILQKLSDHFGVELSHRKPEVKDVITEAIN). DNA-binding regions lie at residues 444 to 458 (DFNT…QKLS) and 473 to 477 (KDVIT). Positions 482 to 530 (AMTDDEEEDEEEEAEAGSDKEKEEVKGEEEEEKAEAESDKEKEKEEPKD) are disordered. Acidic residues predominate over residues 484-497 (TDDEEEDEEEEAEA). A coiled-coil region spans residues 492-527 (EEEAEAGSDKEKEEVKGEEEEEKAEAESDKEKEKEE). Basic and acidic residues predominate over residues 516–530 (EAESDKEKEKEEPKD).

As to quaternary structure, found in a mRNA splicing-dependent exon junction complex (EJC). Binds specifically histones H3 and H4.

It localises to the nucleus. Its subcellular location is the nucleolus. Its function is as follows. Chromatin-associated protein which contributes to the modulation of chromatin structure (such as super-helical structure of DNA) and function. Binds to chromatin of protein-coding genes throughout the genome to regulate nucleosome occupancy and chromatin accessibility, and to modulate the expression of target genes. The protein is DEK domain-containing chromatin-associated protein 2 of Arabidopsis thaliana (Mouse-ear cress).